A 230-amino-acid polypeptide reads, in one-letter code: Sugar fermentation stimulation protein homolog (230 aa).

The protein belongs to the SfsA family.

The protein is Sugar fermentation stimulation protein homolog of Thermoanaerobacter pseudethanolicus (strain ATCC 33223 / 39E) (Clostridium thermohydrosulfuricum).